A 237-amino-acid chain; its full sequence is Phosphoribosylaminoimidazole-succinocarboxamide synthase (237 aa).

This sequence belongs to the SAICAR synthetase family.

It carries out the reaction 5-amino-1-(5-phospho-D-ribosyl)imidazole-4-carboxylate + L-aspartate + ATP = (2S)-2-[5-amino-1-(5-phospho-beta-D-ribosyl)imidazole-4-carboxamido]succinate + ADP + phosphate + 2 H(+). Its pathway is purine metabolism; IMP biosynthesis via de novo pathway; 5-amino-1-(5-phospho-D-ribosyl)imidazole-4-carboxamide from 5-amino-1-(5-phospho-D-ribosyl)imidazole-4-carboxylate: step 1/2. The sequence is that of Phosphoribosylaminoimidazole-succinocarboxamide synthase from Shigella boydii serotype 4 (strain Sb227).